A 135-amino-acid polypeptide reads, in one-letter code: Large ribosomal subunit protein uL16c (135 aa).

This sequence belongs to the universal ribosomal protein uL16 family. Part of the 50S ribosomal subunit.

It localises to the plastid. It is found in the chloroplast. The polypeptide is Large ribosomal subunit protein uL16c (Drimys granadensis).